Here is a 425-residue protein sequence, read N- to C-terminus: Serine--tRNA ligase (425 aa).

An L-serine-binding site is contributed by 230-232 (TAE). 261-263 (RSE) is an ATP binding site. Glu284 is a binding site for L-serine. 348–351 (EISS) serves as a coordination point for ATP. Ser384 lines the L-serine pocket.

It belongs to the class-II aminoacyl-tRNA synthetase family. Type-1 seryl-tRNA synthetase subfamily. Homodimer. The tRNA molecule binds across the dimer.

It localises to the cytoplasm. The enzyme catalyses tRNA(Ser) + L-serine + ATP = L-seryl-tRNA(Ser) + AMP + diphosphate + H(+). The catalysed reaction is tRNA(Sec) + L-serine + ATP = L-seryl-tRNA(Sec) + AMP + diphosphate + H(+). It functions in the pathway aminoacyl-tRNA biosynthesis; selenocysteinyl-tRNA(Sec) biosynthesis; L-seryl-tRNA(Sec) from L-serine and tRNA(Sec): step 1/1. Its function is as follows. Catalyzes the attachment of serine to tRNA(Ser). Is also able to aminoacylate tRNA(Sec) with serine, to form the misacylated tRNA L-seryl-tRNA(Sec), which will be further converted into selenocysteinyl-tRNA(Sec). This chain is Serine--tRNA ligase, found in Streptococcus equi subsp. zooepidemicus (strain MGCS10565).